The following is a 135-amino-acid chain: Protein NrdI (135 aa).

The protein belongs to the NrdI family.

Its function is as follows. Probably involved in ribonucleotide reductase function. The sequence is that of Protein NrdI from Pectobacterium carotovorum subsp. carotovorum (strain PC1).